The following is a 421-amino-acid chain: Synaptotagmin-1 (421 aa).

Topologically, residues 1-57 (MVSASHPEALAAPVTTVATLVPHNATEPASPGEGKEDAFSKLKQKFMNELHKIPLPP) are vesicular. N24 carries N-linked (GlcNAc...) asparagine glycosylation. Residues 58–79 (WALIAIAIVAVLLVVTCCFCVC) traverse the membrane as a helical segment. Residues C74, C75, C77, C79, and C82 are each lipidated (S-palmitoyl cysteine). Residues 80–421 (KKCLFKKKNK…EVDAMLAVKK (342 aa)) lie on the Cytoplasmic side of the membrane. Positions 112–141 (TMKDQALKDDDAETGLTDGEEKEEPKEEEK) are disordered. Residues 121–133 (DDAETGLTDGEEK) are compositionally biased toward acidic residues. T128 carries the phosphothreonine modification. The tract at residues 135 to 381 (EPKEEEKLGK…AIGKVFVGYN (247 aa)) is phospholipid binding. Residues 141–260 (KLGKLQYSLD…DFGHVTEEWR (120 aa)) enclose the C2 1 domain. Ca(2+) is bound by residues L171, D172, and D178. A Phosphotyrosine modification is found at Y229. Residues D230, F231, D232, S235, K236, and D238 each coordinate Ca(2+). Residue S264 is modified to Phosphoserine. The C2 2 domain occupies 272–405 (KLGDICFSLR…NPRRPIAQWH (134 aa)). 2 residues coordinate Ca(2+): D303 and D309. 2 positions are modified to phosphoserine: S342 and S344. Ca(2+) contacts are provided by D363, D365, and D371.

This sequence belongs to the synaptotagmin family. Homotetramer. Heterodimer; heterodimerizes with SYT2 in presence of calcium. Interacts with SCAMP5. Interacts with STON2. Forms a complex with SV2B, syntaxin 1 and SNAP25. Interacts with SV2A, SV2B and SV2C. Interacts with RIMS1. Interacts with PRRT2. Interacts with DNAJC5 in a phosphorylation-dependent manner. Interacts (via N-terminus) with RAB3A. Interacts with SYT12. Interacts with calmodulin. Interacts with DNM1 (via C-terminal proline-rich domain (PRD)); this interaction facilitates vesicle fission during clathrin-mediated endocytosis (CME). As to quaternary structure, (Microbial infection) Interacts with C.botulinum neurotoxin type B (BoNT/B, botB). Has lower affinity for BoNT/B than Syt2; mutating its residues to match those in Syt2 increases its affinity. In terms of assembly, (Microbial infection) Interacts with C.botulinum neurotoxin type G (BoNT/G, botG). Ca(2+) serves as cofactor. Post-translationally, glycosylated. In terms of tissue distribution, expressed in the brain (at protein level). Predominantly expressed in rostral, phylogenetically younger brain regions, and in some endocrine tissues.

It is found in the cytoplasmic vesicle. It localises to the secretory vesicle membrane. The protein resides in the secretory vesicle. The protein localises to the synaptic vesicle membrane. Its subcellular location is the chromaffin granule membrane. It is found in the cytoplasm. Calcium sensor that participates in triggering neurotransmitter release at the synapse. May have a regulatory role in the membrane interactions during trafficking of synaptic vesicles at the active zone of the synapse. It binds acidic phospholipids with a specificity that requires the presence of both an acidic head group and a diacyl backbone. A Ca(2+)-dependent interaction between synaptotagmin and putative receptors for activated protein kinase C has also been reported. It can bind to at least three additional proteins in a Ca(2+)-independent manner; these are neurexins, syntaxin and AP2. Plays a role in dendrite formation by melanocytes. Functionally, (Microbial infection) Receptor for C.botulinum neurotoxin type B (BoNT/B, botB); interaction is improved in the presence of gangliosides. BoNT/B toxin binds to the membrane proximal vesicular domain of Syt1 (residues 32-51). Its function is as follows. (Microbial infection) Receptor for C.botulinum neurotoxin type G (BoNT/G, botG); unlike the case with BoNT/B, interaction is not improved in the presence of gangliosides. BoNT/G toxin binds to the vesicular domain of Syt1 (residues 32-53). The sequence is that of Synaptotagmin-1 from Rattus norvegicus (Rat).